The following is a 206-amino-acid chain: Guanylate kinase (206 aa).

Residues 5-183 (FNLLILSGPS…SKEIILSIAK (179 aa)) form the Guanylate kinase-like domain. 12–19 (GPSGAGKS) provides a ligand contact to ATP.

It belongs to the guanylate kinase family.

Its subcellular location is the cytoplasm. The catalysed reaction is GMP + ATP = GDP + ADP. Its function is as follows. Essential for recycling GMP and indirectly, cGMP. This Helicobacter pylori (strain HPAG1) protein is Guanylate kinase.